The following is a 476-amino-acid chain: Adenosylhomocysteinase (476 aa).

Thr-67, Asp-142, and Glu-202 together coordinate substrate. Residue 203-205 participates in NAD(+) binding; sequence TTT. The substrate site is built by Lys-232 and Asp-236. NAD(+) is bound by residues Asn-237, 266–271, Glu-289, Asn-324, 345–347, and Asn-390; these read GYGDVG and IGH.

It belongs to the adenosylhomocysteinase family. It depends on NAD(+) as a cofactor.

Its subcellular location is the cytoplasm. The enzyme catalyses S-adenosyl-L-homocysteine + H2O = L-homocysteine + adenosine. It functions in the pathway amino-acid biosynthesis; L-homocysteine biosynthesis; L-homocysteine from S-adenosyl-L-homocysteine: step 1/1. May play a key role in the regulation of the intracellular concentration of adenosylhomocysteine. This chain is Adenosylhomocysteinase, found in Synechococcus sp. (strain WH7803).